Reading from the N-terminus, the 739-residue chain is Catalase-peroxidase (739 aa).

The first 23 residues, 1-23 (MLKKIVTALGMSGMLLAANSAIA), serve as a signal peptide directing secretion. A cross-link (tryptophyl-tyrosyl-methioninium (Trp-Tyr) (with M-247)) is located at residues 100–221 (WHDAGTYRLA…YAATQMGLIY (122 aa)). His-101 functions as the Proton acceptor in the catalytic mechanism. Residues 221–247 (YVNPEGPDGKPDIKGAASEIRQAFRAM) constitute a cross-link (tryptophyl-tyrosyl-methioninium (Tyr-Met) (with W-100)). Residue His-262 participates in heme b binding.

The protein belongs to the peroxidase family. Peroxidase/catalase subfamily. In terms of assembly, homodimer or homotetramer. The cofactor is heme b. Formation of the three residue Trp-Tyr-Met cross-link is important for the catalase, but not the peroxidase activity of the enzyme.

It carries out the reaction H2O2 + AH2 = A + 2 H2O. The enzyme catalyses 2 H2O2 = O2 + 2 H2O. Its function is as follows. Bifunctional enzyme with both catalase and broad-spectrum peroxidase activity. This chain is Catalase-peroxidase, found in Francisella philomiragia subsp. philomiragia (strain ATCC 25017 / CCUG 19701 / FSC 153 / O#319-036).